A 419-amino-acid polypeptide reads, in one-letter code: F-box/LRR-repeat protein At1g67190 (419 aa).

Residues 1–48 (MDYLPVEVIGNILSRLGGARDVVIASATCRKWREACRKHLQTLSFNSA) form the F-box domain. LRR repeat units lie at residues 53 to 82 (YRDL…SIMM), 96 to 124 (WLMY…EICG), 133 to 157 (LAHN…LSLS), 158 to 183 (YVSI…ELVS), 185 to 209 (EIAM…YFDG), 245 to 272 (HFKL…DVNH), 273 to 297 (FTMV…RLWD), 301 to 326 (DDDD…SLSY), and 356 to 381 (INDV…IIYG).

This Arabidopsis thaliana (Mouse-ear cress) protein is F-box/LRR-repeat protein At1g67190.